The primary structure comprises 518 residues: Membrane-bound glycerophospholipid O-acyltransferase 2 (518 aa).

The next 6 membrane-spanning stretches (helical) occupy residues 21-41 (PVDQVNFVVCQLFALLAAIWF), 60-80 (TLLGLYLALFCFGWYALHFVI), 87-107 (YLMIIIGVENMHKYCFVFALG), 183-203 (FMGILAGPLCSYKDYITFIEG), 230-250 (IAVAQKLLICGLSLLFHMTIT), and 267-283 (ASWPVRVFYLYLSLMAA). Catalysis depends on residues Asn-341 and His-372. The next 3 helical transmembrane spans lie at 365–385 (FILSAIWHGVYPGYYLTFLTG), 415–435 (IITWMTTQVAISYTVVPFVLL), and 443–463 (FYSSCYFCLHIASILVLLVFP).

It belongs to the membrane-bound acyltransferase family.

Its subcellular location is the endoplasmic reticulum membrane. It carries out the reaction a 1-acyl-sn-glycero-3-phosphocholine + an acyl-CoA = a 1,2-diacyl-sn-glycero-3-phosphocholine + CoA. The enzyme catalyses a 1-acyl-sn-glycero-3-phosphoethanolamine + an acyl-CoA = a 1,2-diacyl-sn-glycero-3-phosphoethanolamine + CoA. It catalyses the reaction a 1-acyl-sn-glycero-3-phosphate + an acyl-CoA = a 1,2-diacyl-sn-glycero-3-phosphate + CoA. The catalysed reaction is (9Z)-hexadecenoyl-CoA + 1-hexadecanoyl-sn-glycero-3-phosphocholine = 1-hexadecanoyl-2-(9Z-hexadecenoyl)-sn-glycero-3-phosphocholine + CoA. It carries out the reaction 1-hexadecanoyl-sn-glycero-3-phosphoethanolamine + (9Z)-octadecenoyl-CoA = 1-hexadecanoyl-2-(9Z-octadecenoyl)-sn-glycero-3-phosphoethanolamine + CoA. The enzyme catalyses 1-hexadecanoyl-sn-glycero-3-phosphoethanolamine + (9Z)-hexadecenoyl-CoA = 1-hexadecanoyl-2-(9Z)-hexadecenoyl-sn-glycero-3-phosphoethanolamine + CoA. It catalyses the reaction 1-(9Z-octadecenoyl)-sn-glycero-3-phospho-L-serine + hexadecanoyl-CoA = 1-(9Z)-octadecenoyl-2-hexadecanoyl-sn-glycero-3-phosphoserine + CoA. The catalysed reaction is (9Z,12Z)-octadecadienoyl-CoA + 1-hexadecanoyl-sn-glycero-3-phosphocholine = 1-hexadecanoyl-2-(9Z,12Z-octadecadienoyl)-sn-glycero-3-phosphocholine + CoA. It carries out the reaction 1-hexadecanoyl-sn-glycero-3-phosphocholine + (9Z)-octadecenoyl-CoA = 1-hexadecanoyl-2-(9Z-octadecenoyl)-sn-glycero-3-phosphocholine + CoA. The enzyme catalyses 1-hexadecanoyl-sn-glycero-3-phosphate + (9Z)-hexadecenoyl-CoA = 1-hexadecanoyl-2-[(9Z)-hexadec-9-enoyl]-sn-glycero-3-phosphate + CoA. It catalyses the reaction 1-hexadecanoyl-sn-glycero-3-phosphate + (9Z)-octadecenoyl-CoA = 1-hexadecanoyl-2-(9Z-octadecenoyl)-sn-glycero-3-phosphate + CoA. The catalysed reaction is a 1-O-(1Z-alkenyl)-sn-glycero-3-phosphocholine + (9Z)-octadecenoyl-CoA = 1-O-(1Z)-alkenyl-2-(9Z)-octadecenoyl-sn-glycero-3-phosphocholine + CoA. It carries out the reaction a 1-O-(1Z-alkenyl)-sn-glycero-3-phosphoethanolamine + (9Z)-octadecenoyl-CoA = 1-O-(1Z)-alkenyl-2-(9Z)-octadecenoyl-sn-glycero-3-phosphoethanolamine + CoA. The enzyme catalyses 1-octadecanoyl-sn-glycero-3-phosphoethanolamine + (9Z)-octadecenoyl-CoA = 1-octadecanoyl-2-(9Z-octadecenoyl)-sn-glycero-3-phosphoethanolamine + CoA. It catalyses the reaction 1-octadecanoyl-sn-glycero-3-phosphocholine + (9Z)-octadecenoyl-CoA = 1-octadecanoyl-2-(9Z-octadecenoyl)-sn-glycero-3-phosphocholine + CoA. The catalysed reaction is 1-(9Z-octadecenoyl)-sn-glycero-3-phosphoethanolamine + (9Z)-octadecenoyl-CoA = 1,2-di-(9Z-octadecenoyl)-sn-glycero-3-phosphoethanolamine + CoA. The protein operates within lipid metabolism; phospholipid metabolism. Its function is as follows. Acyltransferase which catalyzes the transfer of an acyl group from an acyl-CoA to a lysophospholipid leading to the production of a phospholipid and participates in the reacylation step of the phospholipid remodeling pathway also known as the Lands cycle. May catalyze preferentially the acylation of lysophosphatidylethanolamine (1-acyl-sn-glycero-3-phosphoethanolamine or LPE) and lysophosphatidic acid (LPA) and to a lesser extend lysophosphatidylcholine (LPC) and lysophosphatidylserine (LPS). Prefers oleoyl-CoA as the acyl donor. This chain is Membrane-bound glycerophospholipid O-acyltransferase 2, found in Gallus gallus (Chicken).